The primary structure comprises 312 residues: Glyoxylate/hydroxypyruvate reductase A (312 aa).

Arginine 227 is an active-site residue. Histidine 275 serves as the catalytic Proton donor.

It belongs to the D-isomer specific 2-hydroxyacid dehydrogenase family. GhrA subfamily.

It is found in the cytoplasm. The catalysed reaction is glycolate + NADP(+) = glyoxylate + NADPH + H(+). The enzyme catalyses (R)-glycerate + NAD(+) = 3-hydroxypyruvate + NADH + H(+). It carries out the reaction (R)-glycerate + NADP(+) = 3-hydroxypyruvate + NADPH + H(+). Catalyzes the NADPH-dependent reduction of glyoxylate and hydroxypyruvate into glycolate and glycerate, respectively. The protein is Glyoxylate/hydroxypyruvate reductase A of Escherichia coli (strain ATCC 8739 / DSM 1576 / NBRC 3972 / NCIMB 8545 / WDCM 00012 / Crooks).